A 431-amino-acid chain; its full sequence is D-tagatose-1,6-bisphosphate aldolase subunit KbaZ (431 aa).

The protein belongs to the GatZ/KbaZ family. KbaZ subfamily. In terms of assembly, forms a complex with KbaY.

It functions in the pathway carbohydrate metabolism; D-tagatose 6-phosphate degradation; D-glyceraldehyde 3-phosphate and glycerone phosphate from D-tagatose 6-phosphate: step 2/2. Component of the tagatose-1,6-bisphosphate aldolase KbaYZ that is required for full activity and stability of the Y subunit. Could have a chaperone-like function for the proper and stable folding of KbaY. When expressed alone, KbaZ does not show any aldolase activity. The chain is D-tagatose-1,6-bisphosphate aldolase subunit KbaZ from Citrobacter koseri (strain ATCC BAA-895 / CDC 4225-83 / SGSC4696).